A 696-amino-acid polypeptide reads, in one-letter code: Junctophilin-2 (696 aa).

The Cytoplasmic portion of the chain corresponds to Met-1–Thr-674. MORN repeat units lie at residues Tyr-14 to Gly-36, Tyr-38 to Thr-59, Phe-60 to Arg-79, Tyr-82 to Ala-104, Tyr-106 to Thr-128, and Tyr-129 to Met-151. Residues Ser-162 and Ser-165 each carry the phosphoserine modification. 2 disordered regions span residues Ser-164–Val-192 and Leu-246–Phe-273. MORN repeat units follow at residues Tyr-285–Arg-307 and Tyr-308–Arg-330. The short motif at Lys-345 to Lys-359 is the Bipartite nuclear localization signal element. The disordered stretch occupies residues Asn-439 to Ala-664. Residues Ser-440, Ser-442, and Ser-462 each carry the phosphoserine modification. The segment covering Glu-457–Pro-471 has biased composition (basic and acidic residues). Thr-470 is modified (phosphothreonine). Positions Glu-474–Pro-487 are enriched in pro residues. Residue Ser-479 is modified to Phosphoserine. Thr-483 bears the Phosphothreonine mark. Residues Lys-488–Pro-492 carry the Nuclear localization signal motif. Phosphoserine is present on residues Ser-527 and Ser-533. A compositionally biased stretch (acidic residues) spans Pro-573–Glu-585. Ser-593, Ser-597, and Ser-613 each carry phosphoserine. Over residues Ala-631 to Gly-644 the composition is skewed to basic and acidic residues. The helical; Anchor for type IV membrane protein transmembrane segment at Val-675 to Leu-695 threads the bilayer.

The protein belongs to the junctophilin family. As to quaternary structure, interacts with TRPC3. Interacts with BAG5 and HSPA8; the interaction with HSPA8 is increased in the presence of BAG5. In terms of assembly, interacts with MEF2C. In terms of processing, proteolytically cleaved by calpain in response to cardiac stress. The major cleavage site takes place at the C-terminus and leads to the release of the Junctophilin-2 N-terminal fragment chain (JP2NT). Post-translationally, phosphorylation on Ser-165, probably by PKC, affects RYR1-mediated calcium ion release, interaction with TRPC3, and skeletal muscle myotubule development. As to expression, abundantly expressed in skeletal muscle and heart. Weak expression in stomach and lung.

It is found in the cell membrane. The protein localises to the sarcoplasmic reticulum membrane. Its subcellular location is the endoplasmic reticulum membrane. The protein resides in the nucleus. Functionally, membrane-binding protein that provides a structural bridge between the plasma membrane and the sarcoplasmic reticulum and is required for normal excitation-contraction coupling in cardiomyocytes. Provides a structural foundation for functional cross-talk between the cell surface and intracellular Ca(2+) release channels by maintaining the 12-15 nm gap between the sarcolemma and the sarcoplasmic reticulum membranes in the cardiac dyads. Necessary for proper intracellular Ca(2+) signaling in cardiac myocytes via its involvement in ryanodine receptor-mediated calcium ion release. Contributes to the construction of skeletal muscle triad junctions. In terms of biological role, transcription repressor required to safeguard against the deleterious effects of cardiac stress. Generated following cleavage of the Junctophilin-2 chain by calpain in response to cardiac stress in cardiomyocytes. Following cleavage and release from the membrane, translocates to the nucleus, binds DNA and represses expression of genes implicated in cell growth and differentiation, hypertrophy, inflammation and fibrosis. Modifies the transcription profile and thereby attenuates pathological remodeling in response to cardiac stress. Probably acts by competing with MEF2 transcription factors and TATA-binding proteins. The sequence is that of Junctophilin-2 from Mus musculus (Mouse).